Consider the following 137-residue polypeptide: Small ribosomal subunit protein uS19 (137 aa).

Belongs to the universal ribosomal protein uS19 family.

Its function is as follows. Protein S19 forms a complex with S13 that binds strongly to the 16S ribosomal RNA. This Methanoculleus marisnigri (strain ATCC 35101 / DSM 1498 / JR1) protein is Small ribosomal subunit protein uS19.